Reading from the N-terminus, the 170-residue chain is Crossover junction endodeoxyribonuclease RuvC (170 aa).

Active-site residues include Asp-12, Glu-72, and Asp-144. The Mg(2+) site is built by Asp-12, Glu-72, and Asp-144.

This sequence belongs to the RuvC family. As to quaternary structure, homodimer which binds Holliday junction (HJ) DNA. The HJ becomes 2-fold symmetrical on binding to RuvC with unstacked arms; it has a different conformation from HJ DNA in complex with RuvA. In the full resolvosome a probable DNA-RuvA(4)-RuvB(12)-RuvC(2) complex forms which resolves the HJ. It depends on Mg(2+) as a cofactor.

It localises to the cytoplasm. It catalyses the reaction Endonucleolytic cleavage at a junction such as a reciprocal single-stranded crossover between two homologous DNA duplexes (Holliday junction).. In terms of biological role, the RuvA-RuvB-RuvC complex processes Holliday junction (HJ) DNA during genetic recombination and DNA repair. Endonuclease that resolves HJ intermediates. Cleaves cruciform DNA by making single-stranded nicks across the HJ at symmetrical positions within the homologous arms, yielding a 5'-phosphate and a 3'-hydroxyl group; requires a central core of homology in the junction. The consensus cleavage sequence is 5'-(A/T)TT(C/G)-3'. Cleavage occurs on the 3'-side of the TT dinucleotide at the point of strand exchange. HJ branch migration catalyzed by RuvA-RuvB allows RuvC to scan DNA until it finds its consensus sequence, where it cleaves and resolves the cruciform DNA. This chain is Crossover junction endodeoxyribonuclease RuvC, found in Nitrobacter hamburgensis (strain DSM 10229 / NCIMB 13809 / X14).